A 1321-amino-acid chain; its full sequence is Serine/threonine-protein kinase SIK3 (1321 aa).

A disordered region spans residues 1–59; sequence MAAAAASGAGGAAGAGTGGAGPAGRLLPPPAPGSPAAPAAVSPAAGQPRPPAPASRGPM. Residues 8–22 are compositionally biased toward gly residues; the sequence is GAGGAAGAGTGGAGP. The span at 36 to 47 shows a compositional bias: low complexity; sequence AAPAAVSPAAGQ. The Protein kinase domain maps to 66-317; it reads YEIDRTIGKG…MEQICKHKWM (252 aa). The residue at position 71 (Thr71) is a Phosphothreonine. ATP contacts are provided by residues 72–80 and Lys95; that span reads IGKGNFAVV. Glu113 is modified (phosphothreonine). Asp188 (proton acceptor) is an active-site residue. Thr221 carries the phosphothreonine; by LKB1 modification. The UBA domain maps to 344–384; that stretch reads PLNEDVLLAMEDMGLDKEQTLQSLRSDAYDHYSAIYSLLCD. Thr469 is modified (phosphothreonine). 3 positions are modified to phosphoserine: Ser551, Ser591, and Ser592. The tract at residues 585–614 is disordered; the sequence is TPVDEESSDGEPDQEAVQSSTYKDSNTLHL. The span at 587–598 shows a compositional bias: acidic residues; it reads VDEESSDGEPDQ. The span at 600 to 613 shows a compositional bias: polar residues; that stretch reads AVQSSTYKDSNTLH. Phosphoserine occurs at positions 626 and 647. The tract at residues 727-772 is disordered; that stretch reads IQPSSPPPNHPNNHLFRQPSNSPPPMSSAMIQPHGAASSSQFQGLP. A compositionally biased stretch (polar residues) spans 763–772; the sequence is ASSSQFQGLP. Ser866 carries the post-translational modification Phosphoserine. The segment at 894 to 945 is disordered; that stretch reads LFSDQSRGSPSSYSPSTGVGFSPTQALKVPPLDQFPTFPPSAHQQPPHYTTS. Positions 896 to 909 are enriched in low complexity; sequence SDQSRGSPSSYSPS. A compositionally biased stretch (polar residues) spans 935-945; that stretch reads AHQQPPHYTTS. Ser978 carries the post-translational modification Phosphoserine. Position 986 is an omega-N-methylarginine (Arg986). The segment covering 1256 to 1265 has biased composition (polar residues); sequence SLMGSQQFQD. The tract at residues 1256 to 1289 is disordered; it reads SLMGSQQFQDGENEECGASLGGHEHPDLSDGSQH.

The protein belongs to the protein kinase superfamily. CAMK Ser/Thr protein kinase family. SNF1 subfamily. Binds to and is activated by YWHAZ when phosphorylated on Thr-221. Interacts with 14-3-3 proteins. Interacts with HDAC4; this interaction leads to HDAC4 retention in the cytoplasm. Interacts with DEPTOR, MLST8/GbetaL, RICTOR and RPTOR. Mg(2+) is required as a cofactor. In terms of processing, phosphorylated at Thr-221 by STK11/LKB1 in complex with STE20-related adapter-alpha (STRADA) pseudo kinase and CAB39. Phosphorylation at Thr-221 is inhibited in response to PTHLH/PTHrP. Phosphorylated at Thr-469 and Ser-551 in response to cAMP signaling. In terms of tissue distribution, expressed in chondrocytes.

It localises to the cytoplasm. It carries out the reaction L-seryl-[protein] + ATP = O-phospho-L-seryl-[protein] + ADP + H(+). The catalysed reaction is L-threonyl-[protein] + ATP = O-phospho-L-threonyl-[protein] + ADP + H(+). With respect to regulation, activated by phosphorylation on Thr-221. In terms of biological role, positive regulator of mTOR signaling that functions by triggering the degradation of DEPTOR, an mTOR inhibitor. Involved in the dynamic regulation of mTOR signaling in chondrocyte differentiation during skeletogenesis. Negatively regulates cAMP signaling pathway possibly by acting on CRTC2/TORC2 and CRTC3/TORC3. Prevents HDAC4 translocation to the nucleus. This Homo sapiens (Human) protein is Serine/threonine-protein kinase SIK3.